We begin with the raw amino-acid sequence, 347 residues long: NADH-ubiquinone oxidoreductase chain 2 (347 aa).

Transmembrane regions (helical) follow at residues 5 to 22 (ILAI…MVLI), 26 to 45 (WLTI…PILM), 60 to 80 (FLTQ…NLLL), 150 to 170 (NPNL…WGGL), 178 to 198 (ILAY…TYNP), 200 to 220 (LMLL…MLFM), 237 to 257 (LPLI…LPPL), 274 to 294 (DMAI…YFYM), and 327 to 347 (PPLI…LTLF).

Belongs to the complex I subunit 2 family. Core subunit of respiratory chain NADH dehydrogenase (Complex I) which is composed of 45 different subunits. Interacts with TMEM242.

It localises to the mitochondrion inner membrane. It carries out the reaction a ubiquinone + NADH + 5 H(+)(in) = a ubiquinol + NAD(+) + 4 H(+)(out). Functionally, core subunit of the mitochondrial membrane respiratory chain NADH dehydrogenase (Complex I) which catalyzes electron transfer from NADH through the respiratory chain, using ubiquinone as an electron acceptor. Essential for the catalytic activity and assembly of complex I. The chain is NADH-ubiquinone oxidoreductase chain 2 from Martes zibellina (Sable).